We begin with the raw amino-acid sequence, 1179 residues long: Serine/threonine-protein kinase pakG (1179 aa).

Residues 12–53 (SKTNEDIELIKQKLKEDRELLEKERAQFEEERKIIFESLNKV) are a coiled coil. Positions 111–124 (IGTPFNVQHKVHVD) constitute a CRIB domain. One can recognise a Protein kinase domain in the interval 139-390 (FLIDCILGTG…AIELLTHPFL (252 aa)). Residues 145–153 (LGTGSYGTV) and lysine 168 each bind ATP. The active-site Proton acceptor is aspartate 257. Disordered regions lie at residues 414–469 (KKKK…SSLD), 589–631 (IGNS…NNNN), 705–1086 (SSSS…PITL), and 1121–1179 (TEIN…SPKK). The stretch at 621-668 (NNNNNNNNNNNEFLINQIKKELILDFNENMKQYINQQLTNLKEEMLKE) forms a coiled coil. 2 stretches are compositionally biased toward low complexity: residues 705–723 (SSSS…SNSS) and 743–761 (LPPS…TSSP). Residues 762–776 (SPSPSPSPSPSPSSP) are compositionally biased toward pro residues. Composition is skewed to low complexity over residues 777–788 (LPSSSTSTVNTP) and 812–833 (NNNN…NNNN). Residues 834–857 (VIQSPKLNNRPLSPTTPTKQFNNR) are compositionally biased toward polar residues. Residues 864–891 (FNNRPPSPSKFNNRPPSPSNRPLSPKNS) show a composition bias toward low complexity. Residues 892 to 946 (YNSLEKSNNGSISNNRPLSPKNSLEKSTTQNNTSSEDISTTTVTVTSEQGGTPIT) are compositionally biased toward polar residues. Over residues 954–963 (RPKPSPPPIP) the composition is skewed to pro residues. Composition is skewed to low complexity over residues 964-997 (MNKS…TIAA), 1024-1046 (TTIT…SPNS), and 1053-1077 (ITTS…SSSN). Positions 1121–1135 (TEINLPSSSPSTPQK) are enriched in polar residues. Over residues 1137–1158 (NTPSSIPTTPTTPTTNGGSVSS) the composition is skewed to low complexity.

This sequence belongs to the protein kinase superfamily. STE Ser/Thr protein kinase family. STE20 subfamily. Requires Mg(2+) as cofactor.

The catalysed reaction is L-seryl-[protein] + ATP = O-phospho-L-seryl-[protein] + ADP + H(+). It carries out the reaction L-threonyl-[protein] + ATP = O-phospho-L-threonyl-[protein] + ADP + H(+). This chain is Serine/threonine-protein kinase pakG, found in Dictyostelium discoideum (Social amoeba).